Consider the following 399-residue polypeptide: Tyrosine--tRNA ligase 2 (399 aa).

The short motif at 43-52 is the 'HIGH' region element; it reads PTAPDLHLGH. A 'KMSKS' region motif is present at residues 227–231; it reads KMSKS. Lysine 230 is a binding site for ATP. Residues 338-398 enclose the S4 RNA-binding domain; it reads ITLLDLCSVA…IGKRYKFRIG (61 aa).

The protein belongs to the class-I aminoacyl-tRNA synthetase family. TyrS type 2 subfamily. As to quaternary structure, homodimer.

It localises to the cytoplasm. The catalysed reaction is tRNA(Tyr) + L-tyrosine + ATP = L-tyrosyl-tRNA(Tyr) + AMP + diphosphate + H(+). Catalyzes the attachment of tyrosine to tRNA(Tyr) in a two-step reaction: tyrosine is first activated by ATP to form Tyr-AMP and then transferred to the acceptor end of tRNA(Tyr). The polypeptide is Tyrosine--tRNA ligase 2 (Photorhabdus laumondii subsp. laumondii (strain DSM 15139 / CIP 105565 / TT01) (Photorhabdus luminescens subsp. laumondii)).